The primary structure comprises 542 residues: Leucine-rich repeat-containing protein 56 (542 aa).

5 LRR repeats span residues 94–115 (NLDQLKLNGSHLGSLRDLGTSL), 117–138 (HLQVLWLARCGLADLDGIASLP), 139–160 (ALKELYASYNNISDLSPLCLLE), 161–182 (QLEVLDLEGNSVEDLGQVRYLQ), and 186–206 (RLAMLTLEGNLVCLQPAPGPT). The LRRCT domain maps to 207-250 (NKVPRGYNYRAEVRKLIPQLQVLDEVPAAHTGPPAPPRLSQDWL). Disordered regions lie at residues 308 to 377 (LLSE…ADSS), 396 to 475 (LPYR…LQSR), and 507 to 542 (RLSPRAQGCPGPKPAPDAAARPPRAAELSHPSPVPT). Over residues 416–426 (RVPEEQVHQAE) the composition is skewed to basic and acidic residues. Positions 522–532 (PDAAARPPRAA) are enriched in low complexity.

It belongs to the LRRC56 family. As to quaternary structure, interacts with IFT88.

The protein resides in the cell projection. The protein localises to the cilium. Functionally, required for the assembly of dynein arms. This is Leucine-rich repeat-containing protein 56 (LRRC56) from Homo sapiens (Human).